Reading from the N-terminus, the 169-residue chain is MASQSSKPQSIYDFTVKDAKGNDVDLSIYKGKVLIIVNVASQCGLTNSNYTDMTEIYKKYKDQGLEILAFPCNQFGGQEPGSIEEIQNMVCTRFKAEYPIFDKVDVNGDNAAPLYKFLKSSKGGFFGDSIKWNFSKFLVDKEGNVVDRYSPTTTPASMEKDIKKLLGVA.

C43 is a catalytic residue.

Belongs to the glutathione peroxidase family.

The protein localises to the cytoplasm. The enzyme catalyses a hydroperoxy polyunsaturated fatty acid + 2 glutathione = a hydroxy polyunsaturated fatty acid + glutathione disulfide + H2O. In terms of biological role, protects cells and enzymes from oxidative damage, by catalyzing the reduction of hydrogen peroxide, lipid peroxides and organic hydroperoxide, by glutathione. The polypeptide is Probable phospholipid hydroperoxide glutathione peroxidase (Nicotiana tabacum (Common tobacco)).